Consider the following 736-residue polypeptide: Exo-oligoalginate lyase (736 aa).

The signal sequence occupies residues 1 to 23 (MLSVNTIKNTLLAAVLVSVPATA). Substrate-binding positions include lysine 136, 146 to 149 (QSLN), lysine 198, histidine 202, and 257 to 260 (YYQR). Tyrosine 258 functions as the Proton donor in the catalytic mechanism. The Proton acceptor role is filled by histidine 413. Positions 415 and 433 each coordinate Zn(2+). Arginine 438 provides a ligand contact to substrate. Histidine 464 is a Zn(2+) binding site. Residue glutamate 667 coordinates substrate.

The protein belongs to the polysaccharide lyase 17 family. Homodimer. It depends on Zn(2+) as a cofactor.

Its subcellular location is the periplasm. The enzyme catalyses Cleavage of 4-deoxy-alpha-L-erythro-hex-4-enopyranuronoside oligosaccharides into 4-deoxy-alpha-L-erythro-hex-4-enopyranuronate monosaccharides.. Functionally, catalyzes the depolymerization of alginate through an exolytic mode of action, via a beta-elimination mechanism. Preferentially acts on oligoalginates with degrees of polymerization higher than 2 to produce the alginate monomer, 4-deoxy-L-erythro-5-hexoseulose uronic acid. This is Exo-oligoalginate lyase from Saccharophagus degradans (strain 2-40 / ATCC 43961 / DSM 17024).